The sequence spans 329 residues: ATP-dependent (S)-NAD(P)H-hydrate dehydratase (329 aa).

Residues 35–326 (TLQLVRNIIP…AEVGAAFSKL (292 aa)) form the YjeF C-terminal domain. Tyr67 carries the phosphotyrosine modification. Residues Gly135 and 188–194 (NHMEFSR) contribute to the (6S)-NADPHX site. N-linked (GlcNAc...) asparagine glycosylation is found at Asn207 and Asn222. ATP contacts are provided by residues 228-232 (KGERD) and 247-256 (GSSRRCGGQG). Asp257 is a (6S)-NADPHX binding site. A glycan (N-linked (GlcNAc...) asparagine) is linked at Asn279.

It belongs to the NnrD/CARKD family. Mg(2+) serves as cofactor.

Its subcellular location is the mitochondrion. The catalysed reaction is (6S)-NADHX + ATP = ADP + phosphate + NADH + H(+). The enzyme catalyses (6S)-NADPHX + ATP = ADP + phosphate + NADPH + H(+). Its function is as follows. Catalyzes the dehydration of the S-form of NAD(P)HX at the expense of ATP, which is converted to ADP. Together with NAD(P)HX epimerase, which catalyzes the epimerization of the S- and R-forms, the enzyme allows the repair of both epimers of NAD(P)HX, a damaged form of NAD(P)H that is a result of enzymatic or heat-dependent hydration. This Pongo abelii (Sumatran orangutan) protein is ATP-dependent (S)-NAD(P)H-hydrate dehydratase.